Reading from the N-terminus, the 438-residue chain is MAKPVVAIVGRANVGKSTLFNKLIKKRIAITQDDPGVTRDRLYMEAEWQNKYFTVVDTGGLEPKSNEIITKNIKKQTELAIETADVILFMVDGKQGITPIDMEVADMLRRTKKSVILVVNKIDHIKQQDNVYDFYNLGFYEIFPISASNSMGLGDLLEAVVSKFDDNSNTESDDDITKVCLIGKPNVGKSSLINNLLNEERMIVTDIAGTTRDAIDSKINYKGNEYIFIDTAGLRKRKKIDTEVERYSVVRTLSAIDRSDICVLMIDATEGVSEQDTKILGYAHDQGKAMIILVNKWDLVEKQTNTMNDFKKDIRTKLGFVMYVPIVFISVKENKRIDTLFTEIEKVDNNYSMRISTGVLNDVISKAVLLNPPPSDKGVRLKIFYITQIEARPPKFLVFINRNDLMHFSYQRYIENQLRENFSFEGVPLQFEFKTRGK.

2 consecutive EngA-type G domains span residues 4-168 (PVVA…DDNS) and 177-352 (TKVC…NNYS). Residues 10 to 17 (GRANVGKS), 57 to 61 (DTGGL), 120 to 123 (NKID), 183 to 190 (GKPNVGKS), 230 to 234 (DTAGL), and 295 to 298 (NKWD) contribute to the GTP site. The region spanning 353 to 437 (MRISTGVLND…PLQFEFKTRG (85 aa)) is the KH-like domain.

Belongs to the TRAFAC class TrmE-Era-EngA-EngB-Septin-like GTPase superfamily. EngA (Der) GTPase family. Associates with the 50S ribosomal subunit.

In terms of biological role, GTPase that plays an essential role in the late steps of ribosome biogenesis. The polypeptide is GTPase Der (Finegoldia magna (strain ATCC 29328 / DSM 20472 / WAL 2508) (Peptostreptococcus magnus)).